Here is a 120-residue protein sequence, read N- to C-terminus: MGENSFSRELRLLTPTHFEFVFKNATPAVSPNLTLLARHNDSPNPRLGITVAKKRVKKAHDRNRIKRIVRESFRNHQQSLPNIDIVVVGKSGLDKLSNQELFLVLSKLWKKLAKRCEKSQ.

It belongs to the RnpA family. Consists of a catalytic RNA component (M1 or rnpB) and a protein subunit.

The catalysed reaction is Endonucleolytic cleavage of RNA, removing 5'-extranucleotides from tRNA precursor.. In terms of biological role, RNaseP catalyzes the removal of the 5'-leader sequence from pre-tRNA to produce the mature 5'-terminus. It can also cleave other RNA substrates such as 4.5S RNA. The protein component plays an auxiliary but essential role in vivo by binding to the 5'-leader sequence and broadening the substrate specificity of the ribozyme. In Pseudoalteromonas atlantica (strain T6c / ATCC BAA-1087), this protein is Ribonuclease P protein component.